Here is a 466-residue protein sequence, read N- to C-terminus: Asparagine--tRNA ligase (466 aa).

It belongs to the class-II aminoacyl-tRNA synthetase family. In terms of assembly, homodimer.

Its subcellular location is the cytoplasm. It catalyses the reaction tRNA(Asn) + L-asparagine + ATP = L-asparaginyl-tRNA(Asn) + AMP + diphosphate + H(+). This is Asparagine--tRNA ligase from Yersinia enterocolitica serotype O:8 / biotype 1B (strain NCTC 13174 / 8081).